An 817-amino-acid polypeptide reads, in one-letter code: Neurabin-2 (817 aa).

2 disordered regions span residues 1 to 52 and 64 to 163; these read MMKT…KYGS and MGTT…GGDK. 2 actin-binding regions span residues 1 to 154 and 164 to 282; these read MMKT…FERS and EAVA…QHRV. The residue at position 15 (serine 15) is a Phosphoserine; by MAPK1. Serine 17 is subject to Phosphoserine; by CDK5. Serine 94 is subject to Phosphoserine; by PKA. Serine 100 and serine 116 each carry phosphoserine. The interaction with D(2) dopamine receptor stretch occupies residues 100 to 371; the sequence is SLNENVDHSA…LERGVDNGRA (272 aa). A compositionally biased stretch (pro residues) spans 131–141; it reads SAQPAPPPHPP. The segment at 169–255 is interaction with ADRA2A, ADRA2B and ADRA2C; it reads RLLRQERAGL…KRSRVFQPPP (87 aa). Position 192 is a phosphoserine (serine 192). Residue threonine 193 is modified to Phosphothreonine. Position 205 is a phosphoserine; by MAPK1 (serine 205). Threonine 207 is modified (phosphothreonine). Positions 216–451 are disordered; that stretch reads EKADSRTGLH…DPAPSRKIHF (236 aa). Positions 290–301 are enriched in basic and acidic residues; it reads KPREVRKIKPVE. Low complexity-rich tracts occupy residues 332–341 and 399–409; these read STPATTASPA and SGLGEDSGGSA. A compositionally biased stretch (acidic residues) spans 410 to 425; that stretch reads LEEDDEEDEEDGEPPY. The interaction with protein phosphatase 1 stretch occupies residues 417–494; sequence DEEDGEPPYE…LEKRVERLEL (78 aa). Residue serine 438 is modified to Phosphoserine. Residues 447 to 451 carry the PP1-binding motif motif; that stretch reads RKIHF. Positions 480–525 are interaction with RGS2; that stretch reads SAEYELEKRVERLELFPVELEKDSEGLGISIIGMGAGADMGLEKLG. Positions 496–584 constitute a PDZ domain; that stretch reads PVELEKDSEG…RVRFMIGRER (89 aa). Positions 595 to 616 form a coiled coil; it reads IQQTLEQERWQREMMEQRYAQY. The segment at 595 to 816 is interaction with TGN38; it reads IQQTLEQERW…NLQTLRNSNS (222 aa). Serine 658 carries the post-translational modification Phosphoserine. A coiled-coil region spans residues 665 to 816; that stretch reads EKLVHKFKEL…NLQTLRNSNS (152 aa).

Possibly exists as a homodimer, homotrimer or a homotetramer. Interacts with F-actin, PPP1CA, neurabin-1, TGN38 and D(2) dopamine receptor. Interacts with RGS1, RGS2, RGS4, RGS19 and ADRA1B, ADRA2A, ADRA2B, ADRA2C, CDKN2A, PPP1R2, RASGFR1 and TIAM1. Interacts (via C-terminus) with SPATA13 (via C-terminal tail). Interacts with DCLK2. Interacts with ADRA2B. In terms of processing, stimulation of D1 (but not D2) dopamine receptors induces Ser-94 phosphorylation. Dephosphorylation of Ser-94 is mediated mainly by PP1 and to a lesser extent by PP2A. Phosphorylation of spinophilin disrupts its association with F-actin, but does not affect its binding to PP1.

The protein localises to the cytoplasm. Its subcellular location is the cytoskeleton. The protein resides in the nucleus. It is found in the postsynaptic density. It localises to the cell junction. The protein localises to the adherens junction. Its subcellular location is the cell projection. The protein resides in the dendritic spine. It is found in the cell membrane. It localises to the lamellipodium. The protein localises to the filopodium. Its subcellular location is the ruffle membrane. In terms of biological role, seems to act as a scaffold protein in multiple signaling pathways. Modulates excitatory synaptic transmission and dendritic spine morphology. Binds to actin filaments (F-actin) and shows cross-linking activity. Binds along the sides of the F-actin. May play an important role in linking the actin cytoskeleton to the plasma membrane at the synaptic junction. Believed to target protein phosphatase 1/PP1 to dendritic spines, which are rich in F-actin, and regulates its specificity toward ion channels and other substrates, such as AMPA-type and NMDA-type glutamate receptors. Plays a role in regulation of G-protein coupled receptor signaling, including dopamine D2 receptors and alpha-adrenergic receptors. May establish a signaling complex for dopaminergic neurotransmission through D2 receptors by linking receptors downstream signaling molecules and the actin cytoskeleton. Binds to ADRA1B and RGS2 and mediates regulation of ADRA1B signaling. May confer to Rac signaling specificity by binding to both, RacGEFs and Rac effector proteins. Probably regulates p70 S6 kinase activity by forming a complex with TIAM1. Required for hepatocyte growth factor (HGF)-induced cell migration. The chain is Neurabin-2 (Ppp1r9b) from Mus musculus (Mouse).